Here is a 1698-residue protein sequence, read N- to C-terminus: METQNHLSCTGQTPLTNASGLKLLPQSVEPVYTNSTLTSFSQHGKVLNYDLPVNGLISPSLSNNAHGTLLSNEHITHNSASNNFDYLWKKPKSSVHKDSHVSNQFLVNGSTCPITNGPSIKRSPQETLGNCTSNQTASFNVSSHSVCSPNEANVKMVTAANGAHYGFYEASLPVSVSASNMQSVSGDNLVKERTVEENEAGATEERNHTPELAEALEPSDTQTDLNICEYKESVLDPVIQSTPNPLLPPDVSNLDDPSQLPSQLGDSHLLNEDSLEPFGADLIQDPISSTMYDLEELEVGSTKQKDPQLDTSSLDCPTYSLSAAFPLVAEDTNDSSVLFNASSASPVLGDSVMQESASEMGEDPEGSKAEEPVSGPENVSQDEMTIENTSPEPCVAAEHEEEELEPGEVKGTISRRRIATPEQVCFPLQHGWRREVRIKKGSHRWQGETWYYAPCGKRMKQFPEVIKYLSKNAGPFVRREHFSFSPRMPVGDFYEERNTAEGLQWVLLNSEEIPSRIIAITGKRGRPRNLEKAKAKEQKAKRGRGRPPKVKMIDLLSKADAKLLRKLENQDILSDSEKVQLCKLKKKMRRKARNQEAKLEAAKKLKEIKEKEEKKQKIQKAKNQEKAKNQEKKRTRRQPKQKAPVVQKPDRKLLAQQRRLEERKRQQFILEELKKPTEDMCLPDHQQLPDFPCVPGLFLPSCAFSDCLTTVEFLHSYGKVLGLDEAKDIPSLCTLQEGLFNVGDSLGEVQDLLVKLLQAAMINPGLPPYCQSLKILGEKVSEIVLSRENVSEPLRIFLEAYGGDIELCDSLRSHPFQAHAPHIKTAILAFIVNELNASSLIISEIDKTLENMSHYRKHKWIIEGKIRRLKFALSKRKSSEESQITTTEVSLRRRSERNAEENDELDSIDESAIQKDYVQEEVDIPPSTSVVELERQIEKLTKRQMFFRKKILGSSQRLRTVCLGQDRYRRCYWMLPHLGGIFIEGLPESAEPTEEAALGNDIEASSVKTEDKSFGSLCKTSGHPRNSTAEPEQNSTSCHCSDSKDKEPSGVTDQFPNSVPLTNNQQDLSQSVFLSWLTKNQTSIMDSTVLTPESSPPHSESTPIISSEATEKPEQWLPLISRTPCRNHNQGLSTHSSNRLSPPSPTAATSVKQVNEFTEEAQTFATSLPSNSTPCHVCYNSGKSSTASHEITLTSNILHDSEKEKRRGRRPSKLLKQIEQKYYNQLIERPIPAGVRQKWWWIKDPAMLESLLKALHPRGIREKTLHKHLTKHLQHLKEMCARPASDALFKFTPVDGHRVSQETLDRWSVTDLTFQVDLSALQWVEDLEQRVMLSDLQQRGWSPSAPDSVRTDLKYYEHQLEPADDITVKVKREDCRLYRESSNPLDLAVLRILCLEENVERKYLKEPLWLFSEVQHEKVVITNPEDPLSTTEIEYSITSRLRLWRQTVERCRSAAQLSLCLQQLERSIAWERSLNKVTCLYCRKGDNDELLLLCDSCDRGCHTYCHRPRMNEIPEGDWFCPTCISLQSESEFLRSSGSSKRIRKCTVRFTEDSPSKPSRRREHPTASQFSPGESPASKKRRMGTRSQSPDLTFCEIILMELESHEDAWPFLEPVNPRLVPGYRKIIKNPMDFSTMRHKLLNGNYSRCEEFAEDAELIFSNCQLFNEDESDVGKAGLILKKFYDARWEEFSQERNQISL.

2 disordered regions span residues 240–262 (QSTP…QLPS) and 352–387 (VMQE…MTIE). A compositionally biased stretch (polar residues) spans 377–387 (ENVSQDEMTIE). The 72-residue stretch at 418–489 (IATPEQVCFP…EHFSFSPRMP (72 aa)) folds into the MBD domain. 2 disordered regions span residues 524–550 (RGRP…PPKV) and 610–653 (EKEE…DRKL). Residues 528–540 (RNLEKAKAKEQKA) are compositionally biased toward basic and acidic residues. The a.T hook 1 DNA-binding region spans 541–553 (KRGRGRPPKVKMI). The stretch at 579–638 (VQLCKLKKKMRRKARNQEAKLEAAKKLKEIKEKEEKKQKIQKAKNQEKAKNQEKKRTRRQ) forms a coiled coil. Over residues 610–632 (EKEEKKQKIQKAKNQEKAKNQEK) the composition is skewed to basic and acidic residues. In terms of domain architecture, DDT spans 701 to 766 (SCAFSDCLTT…LQAAMINPGL (66 aa)). Disordered regions lie at residues 884–905 (ITTT…NDEL), 1013–1063 (SFGS…PLTN), 1088–1110 (TVLT…SEAT), and 1123–1149 (TPCR…TAAT). The span at 890–900 (SLRRRSERNAE) shows a compositional bias: basic and acidic residues. Polar residues-rich tracts occupy residues 1023–1040 (HPRN…SCHC) and 1051–1063 (VTDQ…PLTN). Low complexity predominate over residues 1091–1108 (TPESSPPHSESTPIISSE). Residues 1124 to 1149 (PCRNHNQGLSTHSSNRLSPPSPTAAT) are compositionally biased toward polar residues. Positions 1204 to 1216 (EKRRGRRPSKLLK) form a DNA-binding region, a.T hook 3. The PHD-type zinc-finger motif lies at 1476–1526 (KVTCLYCRKGDNDELLLLCDSCDRGCHTYCHRPRMNEIPEGDWFCPTCISL). A disordered region spans residues 1549–1587 (FTEDSPSKPSRRREHPTASQFSPGESPASKKRRMGTRSQ). Residues 1585–1689 (RSQSPDLTFC…KFYDARWEEF (105 aa)) form the Bromo domain.

The protein belongs to the WAL family. In terms of assembly, component of the NoRC complex, at least composed of SMARCA5/SNF2H and BAZ2A/TIP5.

Its subcellular location is the nucleus. The protein localises to the nucleolus. Its function is as follows. Essential component of the NoRC (nucleolar remodeling complex) complex, a complex that mediates silencing of a fraction of rDNA by recruiting histone-modifying enzymes and DNA methyltransferases, leading to heterochromatin formation and transcriptional silencing. In the complex, it plays a central role by being recruited to rDNA and by targeting chromatin modifying enzymes such as HDAC1, leading to repress RNA polymerase I transcription. Recruited to rDNA via its interaction with TTF1 and its ability to recognize and bind histone H4 acetylated on 'Lys-16' (H4K16ac), leading to deacetylation of H4K5ac, H4K8ac, H4K12ac but not H4K16ac. Specifically binds pRNAs, 150-250 nucleotide RNAs that are complementary in sequence to the rDNA promoter; pRNA-binding is required for heterochromatin formation and rDNA silencing. This is Bromodomain adjacent to zinc finger domain protein 2A (baz2a) from Xenopus laevis (African clawed frog).